The following is a 63-amino-acid chain: Beta-defensin 4 (63 aa).

The first 22 residues, 1–22, serve as a signal peptide directing secretion; the sequence is MRIHYLLFSFLLVLLSPLSAFT. Glutamine 23 carries the pyrrolidone carboxylic acid modification. 3 disulfides stabilise this stretch: cysteine 31/cysteine 59, cysteine 38/cysteine 52, and cysteine 42/cysteine 60.

The protein belongs to the beta-defensin family. As to expression, highly expressed in lung.

Its subcellular location is the secreted. Its function is as follows. Exhibits antimicrobial activity against Gram-negative bacteria and Gram-positive bacteria. May act as a ligand for C-C chemokine receptor CCR6. Binds to CCR6 and induces chemotactic activity of CCR6-expressing cells. The chain is Beta-defensin 4 (Defb4) from Rattus norvegicus (Rat).